Reading from the N-terminus, the 139-residue chain is Ribulose bisphosphate carboxylase small subunit (139 aa).

This sequence belongs to the RuBisCO small chain family. As to quaternary structure, heterohexadecamer of 8 large and 8 small subunits.

The protein localises to the plastid. It localises to the chloroplast. Its function is as follows. RuBisCO catalyzes two reactions: the carboxylation of D-ribulose 1,5-bisphosphate, the primary event in carbon dioxide fixation, as well as the oxidative fragmentation of the pentose substrate in the photorespiration process. Both reactions occur simultaneously and in competition at the same active site. Although the small subunit is not catalytic it is essential for maximal activity. In Pylaiella littoralis (Seaweed), this protein is Ribulose bisphosphate carboxylase small subunit.